Consider the following 481-residue polypeptide: Zinc finger CCCH domain-containing protein 4 (481 aa).

Residues 157–184 (RNRAHVCSFFIRGECTRGAECPYRHEMP) form a C3H1-type zinc finger. Residues 228 to 301 (KTLYVGGLNS…QRLKLTWGRP (74 aa)) form the RRM domain. The disordered stretch occupies residues 329 to 481 (HNQPPPMQQY…DVSTATGSSQ (153 aa)). Residues 331-345 (QPPPMQQYYMHPPPA) are compositionally biased toward pro residues. 2 stretches are compositionally biased toward low complexity: residues 369–389 (AGGS…MPPH) and 399–410 (YMPSPYQQQYPP). Pro residues predominate over residues 423–444 (APPPAAYPYPQQPGPGSRPAPS). The segment covering 449-471 (SAISPDSAPAGSGAPSGSSQQAP) has biased composition (low complexity). Polar residues predominate over residues 472–481 (DVSTATGSSQ).

The polypeptide is Zinc finger CCCH domain-containing protein 4 (Arabidopsis thaliana (Mouse-ear cress)).